We begin with the raw amino-acid sequence, 103 residues long: Small ribosomal subunit protein uS10 (103 aa).

This sequence belongs to the universal ribosomal protein uS10 family. In terms of assembly, part of the 30S ribosomal subunit.

Functionally, involved in the binding of tRNA to the ribosomes. This Xanthomonas campestris pv. campestris (strain B100) protein is Small ribosomal subunit protein uS10.